We begin with the raw amino-acid sequence, 235 residues long: Thiamine import ATP-binding protein ThiQ (235 aa).

One can recognise an ABC transporter domain in the interval 2–230 (LKLIDITWLY…QASASALLGI (229 aa)). 32-39 (GPSGAGKS) lines the ATP pocket.

This sequence belongs to the ABC transporter superfamily. Thiamine importer (TC 3.A.1.19.1) family. As to quaternary structure, the complex is composed of two ATP-binding proteins (ThiQ), two transmembrane proteins (ThiP) and a solute-binding protein (ThiB).

The protein localises to the cell inner membrane. It catalyses the reaction thiamine(out) + ATP + H2O = thiamine(in) + ADP + phosphate + H(+). Functionally, part of the ABC transporter complex ThiBPQ involved in thiamine import. Responsible for energy coupling to the transport system. Is also involved in thiamine pyrophosphate (TPP) transport. The polypeptide is Thiamine import ATP-binding protein ThiQ (Salmonella typhimurium (strain LT2 / SGSC1412 / ATCC 700720)).